The primary structure comprises 3685 residues: Dystrophin (3685 aa).

The segment at 1-240 is actin-binding; the sequence is MLWWEEVEDC…YITSLFQVLP (240 aa). Calponin-homology (CH) domains lie at 15–119 and 134–240; these read DVQK…LHWQ and TNSE…QVLP. Residues 63 to 72 are ANK2- and ANK-3 binding; that stretch reads PKEKGSTRVH. Spectrin repeat units follow at residues 339-447, 448-556, 559-667, 719-828, 830-934, 943-1045, 1048-1154, 1157-1263, 1266-1367, 1368-1463, 1468-1568, 1571-1676, 1679-1778, 1779-1874, 1877-1979, 1992-2101, 2104-2208, 2211-2318, 2319-2423, 2475-2577, 2580-2686, 2689-2802, 2808-2930, and 2935-3040; these read VNLD…NLHR, VLMD…LLQD, LKWQ…QISQ, EIRK…WLEY, NNII…ELQT, RYQE…KLEE, NKLR…ALKG, EKTV…TLEE, ACWH…LLEQ, SIQS…LFQK, EQRL…QLEK, KLSR…LLLE, KHME…KASI, PLKE…KALE, HQWY…TVRE, EISY…RFDR, EKWR…RLEE, NILS…EIEA, QIKD…LRAK, FNRA…QLNE, KDST…ALEE, RLLQ…HLEA, KRLH…RKID, and RLRE…QLHE. A Phosphothreonine modification is found at asparagine 340. Residues tyrosine 344 and leucine 348 each carry the phosphoserine modification. Glutamate 519, serine 616, and serine 629 each carry phosphothreonine. Positions 1415 to 1913 are interaction with SYNM; sequence SDLTSHEISL…PEPRDERKIK (499 aa). The WW domain occupies 3055–3088; sequence TSVQGPWERAISPNKVPYYINHETQTTCWDHPKM. Residues 3058–3408 are interaction with SYNM; sequence QGPWERAISP…TVLEGDNMET (351 aa). The ZZ-type; degenerate zinc-finger motif lies at 3308 to 3364; sequence KHQAKCNICKECPIIGFRYRSLKHFNYDICQSCFFSGRVAKGHKMHYPMVEYCTPTT. Positions 3313, 3316, 3337, and 3340 each coordinate Zn(2+). The interval 3466-3518 is binds to SNTB1; sequence DDEHLLIQHYCQSLNQDSPLSQPRSPAQILISLESEERGELERILADLEEENR. Residues serine 3483, serine 3490, and serine 3500 each carry the phosphoserine modification. Disordered regions lie at residues 3528 to 3554 and 3603 to 3685; these read KQQHEHKGLSPLPSPPEMMPTSPQSPR and EAKV…EDTM. Polar residues-rich tracts occupy residues 3607-3626 and 3662-3673; these read NGTTVSSPSTSLQRSDSSQP and QLNNSFPSSRGR. 6 positions are modified to phosphoserine: serine 3612, serine 3613, serine 3617, serine 3623, serine 3624, and serine 3666.

In terms of assembly, interacts with SYNM. Interacts with the syntrophins SNTA1, SNTB1, SNTB2, SNTG1 and SNTG2. Interacts with KRT19. Component of the dystrophin-associated glycoprotein complex which is composed of three subcomplexes: a cytoplasmic complex comprised of DMD (or UTRN), DTNA and a number of syntrophins, such as SNTB1, SNTB2, SNTG1 and SNTG2, the transmembrane dystroglycan complex, and the sarcoglycan-sarcospan complex. Interacts with DAG1 (betaDAG1) with DMD; the interaction is inhibited by phosphorylation on the PPXY motif of DAG1. Interacts with CMYA5. Directly interacts with ANK2 and ANK3; these interactions do not interfere with betaDAG1-binding and are necessary for proper localization in muscle cells. Identified in a dystroglycan complex that contains at least PRX, DRP2, UTRN, DMD and DAG1. Interacts with DTNB. Interacts with PGM5; the interaction is direct. Interacts with NOS1; localizes NOS1 to sarcolemma in muscle cells. Expressed in muscle fibers accumulating in the costameres of myoplasm at the sarcolemma. Expressed in brain, muscle, kidney, lung and testis. Most tissues contain transcripts of multiple isoforms. Isoform 15: Only isoform to be detected in heart and liver and is also expressed in brain, testis and hepatoma cells.

Its subcellular location is the cell membrane. It is found in the sarcolemma. It localises to the cytoplasm. The protein localises to the cytoskeleton. The protein resides in the postsynaptic cell membrane. In terms of biological role, anchors the extracellular matrix to the cytoskeleton via F-actin. Ligand for dystroglycan. Component of the dystrophin-associated glycoprotein complex which accumulates at the neuromuscular junction (NMJ) and at a variety of synapses in the peripheral and central nervous systems and has a structural function in stabilizing the sarcolemma. Also implicated in signaling events and synaptic transmission. In Homo sapiens (Human), this protein is Dystrophin.